The following is a 141-amino-acid chain: Nucleoside diphosphate kinase (141 aa).

6 residues coordinate ATP: lysine 11, phenylalanine 59, arginine 87, threonine 93, arginine 104, and asparagine 114. Histidine 117 functions as the Pros-phosphohistidine intermediate in the catalytic mechanism.

The protein belongs to the NDK family. Homotetramer. It depends on Mg(2+) as a cofactor.

Its subcellular location is the cytoplasm. It carries out the reaction a 2'-deoxyribonucleoside 5'-diphosphate + ATP = a 2'-deoxyribonucleoside 5'-triphosphate + ADP. The enzyme catalyses a ribonucleoside 5'-diphosphate + ATP = a ribonucleoside 5'-triphosphate + ADP. In terms of biological role, major role in the synthesis of nucleoside triphosphates other than ATP. The ATP gamma phosphate is transferred to the NDP beta phosphate via a ping-pong mechanism, using a phosphorylated active-site intermediate. This is Nucleoside diphosphate kinase from Nitrosomonas eutropha (strain DSM 101675 / C91 / Nm57).